Consider the following 180-residue polypeptide: tRNA (cytidine(56)-2'-O)-methyltransferase (180 aa).

Residues Leu-82, 112 to 116, and 130 to 137 contribute to the S-adenosyl-L-methionine site; these read GAEKV and VGNQPHSE.

Belongs to the aTrm56 family. In terms of assembly, homodimer.

Its subcellular location is the cytoplasm. It catalyses the reaction cytidine(56) in tRNA + S-adenosyl-L-methionine = 2'-O-methylcytidine(56) in tRNA + S-adenosyl-L-homocysteine + H(+). In terms of biological role, specifically catalyzes the AdoMet-dependent 2'-O-ribose methylation of cytidine at position 56 in tRNAs. The sequence is that of tRNA (cytidine(56)-2'-O)-methyltransferase from Methanococcus vannielii (strain ATCC 35089 / DSM 1224 / JCM 13029 / OCM 148 / SB).